The chain runs to 11103 residues: Colossin-A (11103 aa).

The N-terminal stretch at 1–35 is a signal peptide; sequence MGTIKTKFKNNYLKNSYLFIIYIILFNLVIGIANS. N-linked (GlcNAc...) asparagine glycosylation is found at Asn-95, Asn-120, Asn-137, and Asn-198. A Kelch 1 repeat occupies 273-324; it reads NLFAVGNYVFFDVNRDGVHETTELFAPNVKVELYDAISSTRLIASTFTDLNG. The CNA-B 1 domain occupies 298–359; it reads APNVKVELYD…SNGPDNVINA (62 aa). Residues Asn-372, Asn-386, and Asn-422 are each glycosylated (N-linked (GlcNAc...) asparagine). The CNA-B 2 domain occupies 423–469; sequence LSGITVQLTTPSHVVLKTAQTDYAGNYVFDDLSEGVYSVHFILPENY. The N-linked (GlcNAc...) asparagine glycan is linked to Asn-493. CNA-B domains are found at residues 551-599, 676-745, 803-871, 931-999, 1057-1095, and 1170-1231; these read LPGV…PDGY, VANV…INLT, APFV…FTLN, AEGV…IDLS, LPNI…EGDY, and LSNT…FNSS. The N-linked (GlcNAc...) asparagine glycan is linked to Asn-678. 3 N-linked (GlcNAc...) asparagine glycosylation sites follow: Asn-1059, Asn-1229, and Asn-1239. One can recognise a CNA-B 9 domain in the interval 1277–1314; it reads ISNIPLSLISQKTNQIISSVVTDSNGKYQFEDVPPGDY. The N-linked (GlcNAc...) asparagine glycan is linked to Asn-1329. 8 consecutive CNA-B domains span residues 1391 to 1458, 1494 to 1530, 1602 to 1651, 1708 to 1779, 1824 to 1891, 1927 to 1963, 2035 to 2086, and 2141 to 2177; these read SDVS…FKLT, LPGV…PGDY, LPGV…YKQV, LSDI…VTVK, LPGV…QVAQ, and VEGI…PGDY. N-linked (GlcNAc...) asparagine glycosylation occurs at Asn-1613. The interval 1716 to 1740 is disordered; the sequence is TDKDGNEISNTKSGPDGKYQFEDVP. 2 N-linked (GlcNAc...) asparagine glycosylation sites follow: Asn-1759 and Asn-1772. Asn-2046 is a glycosylation site (N-linked (GlcNAc...) asparagine). 2 N-linked (GlcNAc...) asparagine glycosylation sites follow: Asn-2192 and Asn-2311. 8 consecutive CNA-B domains span residues 2254–2321, 2357–2402, 2465–2514, 2571–2640, 2687–2754, 2790–2835, 2898–2947, and 3004–3040; these read SDVS…FKLT, LPGV…TPIG, LPGV…YKQV, LSDI…NFVT, and LEGI…PGDY. Asn-2476 carries an N-linked (GlcNAc...) asparagine glycan. A disordered region spans residues 2580-2603; sequence DKDGNEITNTKSGPDGKYQFEDVP. An N-linked (GlcNAc...) asparagine glycan is attached at Asn-2622. Asn-2801 and Asn-2909 each carry an N-linked (GlcNAc...) asparagine glycan. N-linked (GlcNAc...) asparagine glycans are attached at residues Asn-3048, Asn-3055, and Asn-3118. 4 consecutive CNA-B domains span residues 3117–3184, 3220–3256, 3328–3364, and 3434–3470; these read SNVS…FKLT, LPGV…PGDY, LPGV…PGSY, and VEGI…PGDY. N-linked (GlcNAc...) asparagine glycosylation occurs at Asn-3339. Asn-3485 is a glycosylation site (N-linked (GlcNAc...) asparagine). Residues 3503-3549 form a Kelch 2 repeat; that stretch reads SCFAVSGPLDNQNLGLSLFYEIGTMVWIDSNNNGKFEQPSDVLKSDV. CNA-B domains lie at 3547–3614, 3650–3686, and 3758–3809; these read SDVS…FKLT, LPGV…PGDY, and LPGV…QVAQ. N-linked (GlcNAc...) asparagine glycosylation is found at Asn-3769 and Asn-3827. Positions 3864–3900 constitute a CNA-B 33 domain; sequence LSDITIRLTDKDGKVIQSTTSGPDGKYQFEDVPPGDY. An N-linked (GlcNAc...) asparagine glycan is attached at Asn-3915. 8 consecutive CNA-B domains span residues 3980–4047, 4083–4128, 4191–4240, 4297–4378, 4425–4492, 4528–4573, 4636–4685, and 4742–4778; these read SDVS…FKLT, LPGV…TPIG, LPGV…YKQV, LSDI…NFVT, and VEGI…PGDY. Residue Asn-4202 is glycosylated (N-linked (GlcNAc...) asparagine). Positions 4286 to 4341 are disordered; it reads NTGKQTDDSPPLSDITIRLTDKDGNEITKTKSRPDGNENSNTKSGPDGKYQFEDVP. Residues 4304-4321 show a composition bias toward basic and acidic residues; that stretch reads LTDKDGNEITKTKSRPDG. Asn-4360 is a glycosylation site (N-linked (GlcNAc...) asparagine). A glycan (N-linked (GlcNAc...) asparagine) is linked at Asn-4647. N-linked (GlcNAc...) asparagine glycans are attached at residues Asn-4792 and Asn-4918. 4 CNA-B domains span residues 4865–4928, 4964–5009, 5072–5123, and 5178–5214; these read ITLT…FKLT, LPGV…TPIG, LPGV…QVAQ, and LEGI…PGDY. N-linked (GlcNAc...) asparagine glycosylation is present at Asn-5083. N-linked (GlcNAc...) asparagine glycosylation is found at Asn-5229, Asn-5292, and Asn-5348. The stretch at 5247 to 5293 is one Kelch 3 repeat; it reads SCFAVSGPLDNQNLGLSPFYEIGTIVWIDSNNNDKFEQPSDIGKSNV. 4 CNA-B domains span residues 5291–5358, 5394–5430, 5502–5553, and 5608–5644; these read SNVS…FKLT, LPGV…PGDY, LPGV…QVAQ, and LSDI…PGDY. A glycan (N-linked (GlcNAc...) asparagine) is linked at Asn-5513. Asn-5659 carries an N-linked (GlcNAc...) asparagine glycan. 4 consecutive CNA-B domains span residues 5724 to 5791, 5827 to 5872, 5935 to 5984, and 6041 to 6077; these read SDVS…FKLT, LPGV…TPIG, LPGV…YKQV, and VEGI…PGDY. N-linked (GlcNAc...) asparagine glycosylation is present at Asn-5946. N-linked (GlcNAc...) asparagine glycosylation is found at Asn-6092 and Asn-6155. CNA-B domains lie at 6154-6221, 6257-6302, 6365-6416, and 6471-6507; these read SNVS…FKLT, LPGV…TPIG, LPGV…QDAQ, and LSDI…PGDY. Asn-6376 carries an N-linked (GlcNAc...) asparagine glycan. N-linked (GlcNAc...) asparagine glycosylation is found at Asn-6522 and Asn-6535. 4 consecutive CNA-B domains span residues 6587–6654, 6690–6726, 6798–6849, and 6904–6940; these read SDVS…FKLT, LEGV…PGDY, LPGV…QVNQ, and VEGI…PGDY. Asn-6701, Asn-6809, and Asn-6848 each carry an N-linked (GlcNAc...) asparagine glycan. Asn-6954, Asn-7080, Asn-7137, and Asn-7245 each carry an N-linked (GlcNAc...) asparagine glycan. 8 consecutive CNA-B domains span residues 7023 to 7090, 7126 to 7171, 7234 to 7285, 7340 to 7411, 7456 to 7523, 7559 to 7596, 7668 to 7719, and 7774 to 7810; these read SDVS…FKLT, LAGV…TPIG, LPGV…QDAQ, LSDI…VTVK, LPGV…PGDY, LTGV…QVAQ, and VEGI…PGDY. The disordered stretch occupies residues 7351 to 7372; the sequence is DGNEITNTKSGPDGKYQFEDVP. N-linked (GlcNAc...) asparagine glycosylation is found at Asn-7391 and Asn-7404. The N-linked (GlcNAc...) asparagine glycan is linked to Asn-7679. N-linked (GlcNAc...) asparagine glycosylation is found at Asn-7825 and Asn-7837. CNA-B domains follow at residues 7887-7954, 7990-8035, 8098-8149, 8204-8265, 8313-8374, 8420-8456, and 8528-8587; these read SDVS…FKLT, LPGV…TPIG, LPGV…QVAQ, IPNI…FSLS, VGKS…VVDQ, LPGV…QGDY, and LPGI…PFDS. Residues Asn-8109 and Asn-8255 are each glycosylated (N-linked (GlcNAc...) asparagine). N-linked (GlcNAc...) asparagine glycosylation is found at Asn-8441, Asn-8539, Asn-8629, Asn-8636, Asn-8655, Asn-8693, Asn-8753, Asn-8811, Asn-8896, Asn-8930, Asn-8976, Asn-9023, Asn-9073, Asn-9087, Asn-9123, Asn-9137, Asn-9146, Asn-9149, Asn-9186, Asn-9297, Asn-9305, Asn-9349, Asn-9409, Asn-9419, Asn-9533, Asn-9543, Asn-9556, Asn-9601, Asn-9709, Asn-9718, Asn-9786, Asn-9839, Asn-9850, Asn-9867, Asn-9891, Asn-9941, Asn-9957, Asn-9989, Asn-10042, Asn-10096, Asn-10111, Asn-10174, Asn-10267, Asn-10315, Asn-10348, Asn-10360, Asn-10379, Asn-10394, Asn-10431, Asn-10477, Asn-10552, Asn-10581, Asn-10715, Asn-10786, Asn-10802, Asn-10943, and Asn-11018. One copy of the Kelch 4 repeat lies at 8592 to 8638; that stretch reads CFDLLDKSITNANLGLIPLYNIGSDAWLDNLNNGVRRNDSLLVPNVT. Positions 8634–8680 constitute a CNA-B 77 domain; it reads VPNVTMSLYDNNGNLIETTITNSSGKYQFNDIQPGSYCVRATVPSNY. The CNA-B 78 domain maps to 8751–8810; that stretch reads LPNVTVQLYDKVSGNILAATRSDDKGGYVVPNLLPSADYCVQFEVPPGYIVVVDSDDSVT. In terms of domain architecture, CNA-B 79 spans 8965–9014; that stretch reads LPGVSVSLFSPNGTSIANTITDENGKYAFKDQVPGSYCIKMIIPPHYQQV. A CNA-B 80 domain is found at 9071-9107; the sequence is VPNITMTLLDSQGKQINSTITNANGFYQFVDVAPGNY. Residues 9185–9220 enclose the CNA-B 81 domain; sequence ANVSLSLVNTGNSEIKTTTTNSQGKYSFGQLLAGNY. The region spanning 9299–9332 is the CNA-B 82 domain; that stretch reads TITLTPNNTALPTQTTTTDVNGNYRFDNLVVGNY. CNA-B domains follow at residues 9407–9447 and 9531–9569; these read LVNI…VVQF and MANI…PGNY. The CNA-B 85 domain occupies 9659-9728; it reads VEGITVRIYD…ATGYISIDLS (70 aa). Positions 10044–10103 constitute a CNA-B 86 domain; sequence TLFNADGSTPNDIFGKPIQMAVTDVNGKYSIPNVPPGSYYMTVSIPPRYIISNFTTTGLV. Positions 10172 to 10236 constitute a CNA-B 87 domain; it reads LPNVTVLLLN…ITPTKLVSTS (65 aa). The CNA-B 88 domain maps to 10313 to 10370; sequence PGNFTVQLKSANQAVNGGLTTVPIGTVVATSPVAANGSFSIPNLQLGNYTLTLIPPSG.

This sequence belongs to the serine-aspartate repeat-containing protein (SDr) family.

The protein localises to the secreted. This Dictyostelium discoideum (Social amoeba) protein is Colossin-A (colA).